The chain runs to 520 residues: Pantetheine hydrolase VNN2 (520 aa).

The first 22 residues, 1–22 (MVTSSFPISVAVFALITLQVGT), serve as a signal peptide directing secretion. The 276-residue stretch at 31–306 (YEHAVILPNK…GKLLLSEVDS (276 aa)) folds into the CN hydrolase domain. An N-linked (GlcNAc...) asparagine glycan is attached at asparagine 39. Residue glutamate 80 is the Proton acceptor of the active site. The active-site Proton donor is lysine 179. Residue cysteine 211 is the Nucleophile of the active site. Residues asparagine 273, asparagine 347, asparagine 357, asparagine 411, and asparagine 468 are each glycosylated (N-linked (GlcNAc...) asparagine). Residue cysteine 493 is the site of GPI-anchor amidated cysteine attachment. A propeptide spans 494-520 (GTSNSAITYLLIFILLMIIALQNIVML) (removed in mature form).

This sequence belongs to the carbon-nitrogen hydrolase superfamily. BTD/VNN family. In terms of tissue distribution, widely expressed with higher expression in spleen and blood.

It is found in the cell membrane. It catalyses the reaction (R)-pantetheine + H2O = cysteamine + (R)-pantothenate. Its function is as follows. Amidohydrolase that hydrolyzes specifically one of the carboamide linkages in D-pantetheine thus recycling pantothenic acid (vitamin B5) and releasing cysteamine. Involved in the thymus homing of bone marrow cells. May regulate beta-2 integrin-mediated cell adhesion, migration and motility of neutrophil. This Homo sapiens (Human) protein is Pantetheine hydrolase VNN2.